Consider the following 72-residue polypeptide: MSKFSNFIINKPFSVINNAACHIFSRYLLENKHLFYQYFKISNTCIDHLEQLINVNFFSSDRTSFCECNRFP.

Probable trans-acting positive activator for the tdc operon. The chain is Threonine dehydratase operon activator protein (tdcR) from Escherichia coli (strain K12).